A 385-amino-acid polypeptide reads, in one-letter code: 28S rRNA (uridine-N(3))-methyltransferase (385 aa).

Disordered regions lie at residues Met1–Trp35 and Gln47–Arg72. Basic and acidic residues-rich tracts occupy residues His15–Trp35 and Gln47–Glu58. The S-adenosyl-L-methionine site is built by Arg293, Gly313, Asn342, and Thr343.

The protein belongs to the class IV-like SAM-binding methyltransferase superfamily. Interacts with INCA1.

Its subcellular location is the cytoplasm. It localises to the cytoskeleton. The protein localises to the spindle. The protein resides in the chromosome. It is found in the centromere. Its subcellular location is the kinetochore. It localises to the microtubule organizing center. The protein localises to the centrosome. The enzyme catalyses uridine in 28S rRNA + S-adenosyl-L-methionine = N(3)-methyluridine in 28S rRNA + S-adenosyl-L-homocysteine + H(+). Its function is as follows. S-adenosyl-L-methionine-dependent methyltransferase that specifically methylates the N3 position of a uridine in 28S rRNA. Required for association of the centrosomes with the poles of the bipolar mitotic spindle during metaphase. Also involved in chromosome alignment. May promote centrosome maturation probably by recruiting A-kinase anchor protein AKAP9 to centrosomes in early mitosis. Binds specifically to miRNA MIR145 hairpin, regulates MIR145 expression at a postranscriptional level. This chain is 28S rRNA (uridine-N(3))-methyltransferase, found in Mus musculus (Mouse).